A 412-amino-acid chain; its full sequence is Putative pectate lyase 11 (412 aa).

Positions 1-24 (MVSYSNNHFAYAFLLLLTIGNTLA) are cleaved as a signal peptide. Aspartate 210, aspartate 234, and aspartate 238 together coordinate Ca(2+). Arginine 290 is an active-site residue.

Belongs to the polysaccharide lyase 1 family. It depends on Ca(2+) as a cofactor.

The catalysed reaction is Eliminative cleavage of (1-&gt;4)-alpha-D-galacturonan to give oligosaccharides with 4-deoxy-alpha-D-galact-4-enuronosyl groups at their non-reducing ends.. It functions in the pathway glycan metabolism; pectin degradation; 2-dehydro-3-deoxy-D-gluconate from pectin: step 2/5. This chain is Putative pectate lyase 11, found in Arabidopsis thaliana (Mouse-ear cress).